A 227-amino-acid chain; its full sequence is Ion-translocating oxidoreductase complex subunit E (227 aa).

The next 5 membrane-spanning stretches (helical) occupy residues 34–56 (AINA…TIIS), 68–88 (IPIY…LLHA), 91–111 (FNLY…CIIV), 127–147 (FFDG…VGSI), and 181–201 (TIIL…LIAI).

Belongs to the NqrDE/RnfAE family. In terms of assembly, the complex is composed of six subunits: RnfA, RnfB, RnfC, RnfD, RnfE and RnfG.

It localises to the cell inner membrane. Part of a membrane-bound complex that couples electron transfer with translocation of ions across the membrane. The chain is Ion-translocating oxidoreductase complex subunit E from Buchnera aphidicola subsp. Acyrthosiphon pisum (strain 5A).